A 1024-amino-acid chain; its full sequence is Beta-galactosidase (1024 aa).

Residues asparagine 103 and aspartate 202 each contribute to the substrate site. Residue aspartate 202 participates in Na(+) binding. Mg(2+) is bound by residues glutamate 417, histidine 419, and glutamate 462. Substrate contacts are provided by residues glutamate 462 and 538–541 (EYAH). Glutamate 462 serves as the catalytic Proton donor. The active-site Nucleophile is the glutamate 538. Asparagine 598 lines the Mg(2+) pocket. The Na(+) site is built by phenylalanine 602 and asparagine 605. The substrate site is built by asparagine 605 and tryptophan 1000.

This sequence belongs to the glycosyl hydrolase 2 family. Homotetramer. It depends on Mg(2+) as a cofactor. The cofactor is Na(+).

The catalysed reaction is Hydrolysis of terminal non-reducing beta-D-galactose residues in beta-D-galactosides.. The protein is Beta-galactosidase of Escherichia coli O17:K52:H18 (strain UMN026 / ExPEC).